A 201-amino-acid polypeptide reads, in one-letter code: 3-isopropylmalate dehydratase small subunit (201 aa).

The protein belongs to the LeuD family. LeuD type 1 subfamily. In terms of assembly, heterodimer of LeuC and LeuD.

It carries out the reaction (2R,3S)-3-isopropylmalate = (2S)-2-isopropylmalate. Its pathway is amino-acid biosynthesis; L-leucine biosynthesis; L-leucine from 3-methyl-2-oxobutanoate: step 2/4. Catalyzes the isomerization between 2-isopropylmalate and 3-isopropylmalate, via the formation of 2-isopropylmaleate. This chain is 3-isopropylmalate dehydratase small subunit, found in Salmonella arizonae (strain ATCC BAA-731 / CDC346-86 / RSK2980).